Reading from the N-terminus, the 335-residue chain is DNA-directed RNA polymerase subunit alpha (335 aa).

The segment at 1 to 248 is alpha N-terminal domain (alpha-NTD); that stretch reads MTIQTSRTLS…GLFAPLQEVS (248 aa). The alpha C-terminal domain (alpha-CTD) stretch occupies residues 256–335; sequence KPDEDNQKNQ…LPRTREKGKA (80 aa).

The protein belongs to the RNA polymerase alpha chain family. In cyanobacteria the RNAP catalytic core is composed of 2 alpha, 1 beta, 1 beta', 1 gamma and 1 omega subunit. When a sigma factor is associated with the core the holoenzyme is formed, which can initiate transcription.

The enzyme catalyses RNA(n) + a ribonucleoside 5'-triphosphate = RNA(n+1) + diphosphate. Functionally, DNA-dependent RNA polymerase catalyzes the transcription of DNA into RNA using the four ribonucleoside triphosphates as substrates. This is DNA-directed RNA polymerase subunit alpha from Synechococcus sp. (strain JA-2-3B'a(2-13)) (Cyanobacteria bacterium Yellowstone B-Prime).